Consider the following 155-residue polypeptide: Ribosomal RNA large subunit methyltransferase H (155 aa).

S-adenosyl-L-methionine contacts are provided by residues L72, G103, and L122–M127.

This sequence belongs to the RNA methyltransferase RlmH family. In terms of assembly, homodimer.

The protein localises to the cytoplasm. It catalyses the reaction pseudouridine(1915) in 23S rRNA + S-adenosyl-L-methionine = N(3)-methylpseudouridine(1915) in 23S rRNA + S-adenosyl-L-homocysteine + H(+). In terms of biological role, specifically methylates the pseudouridine at position 1915 (m3Psi1915) in 23S rRNA. The chain is Ribosomal RNA large subunit methyltransferase H from Methylobacillus flagellatus (strain ATCC 51484 / DSM 6875 / VKM B-1610 / KT).